The primary structure comprises 24 residues: Ascaphin-6 (24 aa).

As to expression, expressed by the skin glands.

It is found in the secreted. Functionally, antimicrobial peptide that shows higher potency against Gram-negative bacteria than against Gram-positive bacteria. Has a very week hemolytic activity. The polypeptide is Ascaphin-6 (Ascaphus truei (Coastal tailed frog)).